Here is a 558-residue protein sequence, read N- to C-terminus: Acylase ACY 1 proenzyme (558 aa).

T368 acts as the Nucleophile in catalysis.

Belongs to the gamma-glutamyltransferase family. Dimer of two non-identical chains processed from the same precursor.

It catalyses the reaction (7R)-7-(4-carboxybutanamido)cephalosporanate + H2O = (7R)-7-aminocephalosporanate + glutarate. It carries out the reaction an N-terminal (5-L-glutamyl)-[peptide] + an alpha-amino acid = 5-L-glutamyl amino acid + an N-terminal L-alpha-aminoacyl-[peptide]. The enzyme catalyses glutathione + H2O = L-cysteinylglycine + L-glutamate. The catalysed reaction is an S-substituted glutathione + H2O = an S-substituted L-cysteinylglycine + L-glutamate. Functionally, besides the cephalosporin acylase I activity which converts GL-7ACA into 7-ACA; this enzyme displays some gamma glutamyltranspeptidase activity. The polypeptide is Acylase ACY 1 proenzyme (acyI) (Pseudomonas sp. (strain V22)).